We begin with the raw amino-acid sequence, 87 residues long: Small ribosomal subunit protein uS15 (87 aa).

The protein belongs to the universal ribosomal protein uS15 family. In terms of assembly, part of the 30S ribosomal subunit. Forms a bridge to the 50S subunit in the 70S ribosome, contacting the 23S rRNA.

Its function is as follows. One of the primary rRNA binding proteins, it binds directly to 16S rRNA where it helps nucleate assembly of the platform of the 30S subunit by binding and bridging several RNA helices of the 16S rRNA. Forms an intersubunit bridge (bridge B4) with the 23S rRNA of the 50S subunit in the ribosome. This chain is Small ribosomal subunit protein uS15, found in Clostridium kluyveri (strain NBRC 12016).